A 216-amino-acid chain; its full sequence is Probable nicotinate-nucleotide adenylyltransferase (216 aa).

It belongs to the NadD family.

It catalyses the reaction nicotinate beta-D-ribonucleotide + ATP + H(+) = deamido-NAD(+) + diphosphate. It functions in the pathway cofactor biosynthesis; NAD(+) biosynthesis; deamido-NAD(+) from nicotinate D-ribonucleotide: step 1/1. Its function is as follows. Catalyzes the reversible adenylation of nicotinate mononucleotide (NaMN) to nicotinic acid adenine dinucleotide (NaAD). This Desulfatibacillum aliphaticivorans protein is Probable nicotinate-nucleotide adenylyltransferase.